The following is a 97-amino-acid chain: Sperm protein associated with the nucleus on the X chromosome A (97 aa).

The tract at residues 1–49 is disordered; the sequence is MDKQSSAGGVKRSVPCDSNEANEMMPETPTGDSDPQPAPKKMKTSESST. The short motif at 37 to 45 is the Nuclear localization signal element; it reads PAPKKMKTS.

The protein belongs to the SPAN-X family. As to expression, detected in testis and sperm.

It localises to the cytoplasm. Its subcellular location is the nucleus. This Homo sapiens (Human) protein is Sperm protein associated with the nucleus on the X chromosome A.